A 131-amino-acid polypeptide reads, in one-letter code: Glycine cleavage system H protein (131 aa).

One can recognise a Lipoyl-binding domain in the interval 24-106 (TVRVGITDYA…YGEGWLVELQ (83 aa)). Lysine 65 carries the N6-lipoyllysine modification.

This sequence belongs to the GcvH family. As to quaternary structure, the glycine cleavage system is composed of four proteins: P, T, L and H. (R)-lipoate is required as a cofactor.

In terms of biological role, the glycine cleavage system catalyzes the degradation of glycine. The H protein shuttles the methylamine group of glycine from the P protein to the T protein. This Mycolicibacterium vanbaalenii (strain DSM 7251 / JCM 13017 / BCRC 16820 / KCTC 9966 / NRRL B-24157 / PYR-1) (Mycobacterium vanbaalenii) protein is Glycine cleavage system H protein.